Here is a 356-residue protein sequence, read N- to C-terminus: MSTVTITDLARENVRNLTPYQSARRLGGNGDVWLNANEYPTAVEFQLTQQTLNRYPECQPKAVIENYAQYAGVKAEQVLVSRGADEGIELLIRAFCEPGKDAILYCPPTYGMYSVSAETIGVECRTVPTLKNWQLDLQGISDKLDGVKVVYVCSPNNPTGQLINPQDFRTLLELTRGKAIVVADEAYIEFCPQASLAGWLAEYPHLAILRTLSKAFALAGLRCGFTLANEEVINLLMKVIAPYPLSTPVADIAAQALSPQGIVAMRERVAQIIAEREYLMAALKEIPCVEQVFDSETNYILARFKASSAVFKSLWDQGIILRDQNKQPSLSGCLRITVGTREESQRVIDALRAEQV.

Lys214 is subject to N6-(pyridoxal phosphate)lysine.

Belongs to the class-II pyridoxal-phosphate-dependent aminotransferase family. Histidinol-phosphate aminotransferase subfamily. As to quaternary structure, homodimer. The cofactor is pyridoxal 5'-phosphate.

The enzyme catalyses L-histidinol phosphate + 2-oxoglutarate = 3-(imidazol-4-yl)-2-oxopropyl phosphate + L-glutamate. The protein operates within amino-acid biosynthesis; L-histidine biosynthesis; L-histidine from 5-phospho-alpha-D-ribose 1-diphosphate: step 7/9. This Escherichia coli (strain SMS-3-5 / SECEC) protein is Histidinol-phosphate aminotransferase.